We begin with the raw amino-acid sequence, 64 residues long: Probable cytochrome c oxidase subunit 5C-3 (64 aa).

A helical membrane pass occupies residues 15-34 (SVVKELVIGLTLGLAAGGLW).

It belongs to the cytochrome c oxidase subunit 5C family.

Its subcellular location is the mitochondrion inner membrane. This protein is one of the nuclear-coded polypeptide chains of cytochrome c oxidase, the terminal oxidase in mitochondrial electron transport. The chain is Probable cytochrome c oxidase subunit 5C-3 from Arabidopsis thaliana (Mouse-ear cress).